The primary structure comprises 243 residues: 7-carboxy-7-deazaguanine synthase (243 aa).

Residues 15–17 (IQG) and R30 contribute to the substrate site. The Radical SAM core domain occupies 21–239 (VIGQKTMFVR…PQLHTLLWGN (219 aa)). [4Fe-4S] cluster-binding residues include C34, C38, and C41. S43 lines the Mg(2+) pocket. Residue S81 coordinates substrate. S-adenosyl-L-methionine is bound by residues G83 and 127–129 (SPK).

The protein belongs to the radical SAM superfamily. 7-carboxy-7-deazaguanine synthase family. In terms of assembly, homodimer. It depends on [4Fe-4S] cluster as a cofactor. The cofactor is S-adenosyl-L-methionine. Mg(2+) is required as a cofactor.

It catalyses the reaction 6-carboxy-5,6,7,8-tetrahydropterin + H(+) = 7-carboxy-7-deazaguanine + NH4(+). The protein operates within purine metabolism; 7-cyano-7-deazaguanine biosynthesis. Functionally, catalyzes the complex heterocyclic radical-mediated conversion of 6-carboxy-5,6,7,8-tetrahydropterin (CPH4) to 7-carboxy-7-deazaguanine (CDG), a step common to the biosynthetic pathways of all 7-deazapurine-containing compounds. The polypeptide is 7-carboxy-7-deazaguanine synthase (Bacillus subtilis (strain 168)).